A 287-amino-acid chain; its full sequence is UPF0725 protein At1g19060 (287 aa).

Belongs to the UPF0725 (EMB2204) family.

This is UPF0725 protein At1g19060 from Arabidopsis thaliana (Mouse-ear cress).